Reading from the N-terminus, the 248-residue chain is MRSSGRKKEQIRPVKITRNFTKYAEGSVLIEVGDTKVLCTASIEEKVPPFLKGSGEGWITAEYNMLPRSTQSRKQREINKLKIDGRTMEIQRLIGRALRSAVDMKALGEKTIWIDCDVLQADGGTRTTSITGSFVALVDAVNKLHQKKPFNVYPIRHFVSAVSVGIVGEEKVLDLCYEEDHVAKVDMNVVMTEEGEFIEIQGTGEAGPFSRKELDELLNLAEKGAKQMIQAQKDALKTDSLWIGTGRE.

Phosphate-binding positions include Arg-86 and 124–126 (GTR).

The protein belongs to the RNase PH family. As to quaternary structure, homohexameric ring arranged as a trimer of dimers.

The enzyme catalyses tRNA(n+1) + phosphate = tRNA(n) + a ribonucleoside 5'-diphosphate. Functionally, phosphorolytic 3'-5' exoribonuclease that plays an important role in tRNA 3'-end maturation. Removes nucleotide residues following the 3'-CCA terminus of tRNAs; can also add nucleotides to the ends of RNA molecules by using nucleoside diphosphates as substrates, but this may not be physiologically important. Probably plays a role in initiation of 16S rRNA degradation (leading to ribosome degradation) during starvation. The protein is Ribonuclease PH of Clostridium perfringens (strain ATCC 13124 / DSM 756 / JCM 1290 / NCIMB 6125 / NCTC 8237 / Type A).